The chain runs to 221 residues: PKHD-type hydroxylase P9211_12561 (221 aa).

The Fe2OG dioxygenase domain maps to 80 to 174 (KVHGTMFTRS…RIVCVGWIQS (95 aa)). 3 residues coordinate Fe cation: His-98, Asp-100, and His-155. Arg-165 contacts 2-oxoglutarate.

Fe(2+) is required as a cofactor. Requires L-ascorbate as cofactor.

The chain is PKHD-type hydroxylase P9211_12561 from Prochlorococcus marinus (strain MIT 9211).